The following is a 128-amino-acid chain: MSPKRIISTPLAPQPIGPYSQAVQVGNTVYLSGQIGMNVRTNEMVTGPIRDEAQQAFTNMKAVVEASGAKMSDVVKVNIFIRNFNDFPAINDVMKEFFQSPFPARSTVGVAELPKNARVEIESIVVIE.

It belongs to the RutC family.

The protein resides in the cytoplasm. The catalysed reaction is 2-iminobutanoate + H2O = 2-oxobutanoate + NH4(+). The enzyme catalyses 2-iminopropanoate + H2O = pyruvate + NH4(+). Catalyzes the hydrolytic deamination of enamine/imine intermediates that form during the course of normal metabolism. May facilitate the release of ammonia from these potentially toxic reactive metabolites, reducing their impact on cellular components. It may act on enamine/imine intermediates formed by several types of pyridoxal-5'-phosphate-dependent dehydratases including L-threonine dehydratase. Preferentially digests Leu and Met in cooperation with L-amino acid oxidase, but digests Phe poorly. The chain is 2-iminobutanoate/2-iminopropanoate deaminase from Dermatophagoides farinae (American house dust mite).